The following is a 318-amino-acid chain: Tyrosine--tRNA ligase (318 aa).

Residue Tyr-35 participates in L-tyrosine binding. Residues 40–48 carry the 'HIGH' region motif; it reads PSGKVHLGH. Tyr-154, Gln-158, Asp-161, and Gln-176 together coordinate L-tyrosine. A 'KMSKS' region motif is present at residues 211 to 215; the sequence is KMSSS. ATP is bound at residue Ser-214.

Belongs to the class-I aminoacyl-tRNA synthetase family. TyrS type 3 subfamily. In terms of assembly, homodimer.

The protein localises to the cytoplasm. The enzyme catalyses tRNA(Tyr) + L-tyrosine + ATP = L-tyrosyl-tRNA(Tyr) + AMP + diphosphate + H(+). Its function is as follows. Catalyzes the attachment of tyrosine to tRNA(Tyr) in a two-step reaction: tyrosine is first activated by ATP to form Tyr-AMP and then transferred to the acceptor end of tRNA(Tyr). The protein is Tyrosine--tRNA ligase of Methanosphaera stadtmanae (strain ATCC 43021 / DSM 3091 / JCM 11832 / MCB-3).